A 237-amino-acid polypeptide reads, in one-letter code: DCN1-like protein 5 (237 aa).

Residues serine 9, serine 41, and serine 48 each carry the phosphoserine modification. The DCUN1 domain occupies phenylalanine 46–lysine 232.

As to quaternary structure, part of a complex that contains DCUN1D5, CUL1 and RBX1; this interaction is bridged by CUL1. Interacts (via the DCUN1 domain) with the unneddylated cullins: interacts with CUL1, CUL2, CUL3, CUL4A, CUL4B and CUL5; these interactions promote the cullin neddylation and the identity of the cullin dictates the affinity of the interaction. Interacts (via DCUN1 domain) with UBE2M (N-terminally acetylated form) and probably with UBE2F (N-terminally acetylated form). May also interact with regulators or subunits of cullin-RING ligases such as RBX1, RNF7, ELOB and DDB1; these interactions are bridged by cullins. Interacts with CAND1; this interaction is bridged by cullins and strongly inhibits the neddylation of cullins. These CAND-cullin-DCNL complexes can only be neddylated in the presence of a substrate adapter. In terms of processing, phosphorylation at Ser-41 is independent of cullin's interaction. Phosphorylated in response to both TICAM1 and MYD88 dependent Toll-like receptor (TLR) pathway activation. Phosphorylated in response to IL1B stimulation. As to expression, weakly expressed in testis, skin and immune tissues (thymus, spleen and lymph nodes).

Its subcellular location is the nucleus. The protein localises to the cytoplasm. It localises to the cytoskeleton. It is found in the spindle. Its function is as follows. Contributes to the neddylation of all cullins by transferring NEDD8 from N-terminally acetylated NEDD8-conjugating E2s enzyme to different cullin C-terminal domain-RBX complexes which is necessary for the activation of cullin-RING E3 ubiquitin ligases (CRLs). May play a role in DNA damage response and may participate in cell proliferation and anchorage-independent cell growth. The polypeptide is DCN1-like protein 5 (Homo sapiens (Human)).